The primary structure comprises 23 residues: Magainin-B2 (23 aa).

As to expression, expressed by the skin glands.

The protein localises to the secreted. In terms of biological role, has antimicrobial activity against Gram-negative bacterium E.coli ATCC 25922 (MIC=50 uM) and against fungus C.albicans ATCC 90028 (MIC=100 uM). Has no hemolytic activity against human erythrocytes even at high concentrations. This is Magainin-B2 from Xenopus borealis (Kenyan clawed frog).